The primary structure comprises 553 residues: MARESRESTTLDSHSAEDQMELLVIKVEQEESSPLAEETSWLGSPGPDRSRQRFRAFRYPEAAGPRQALSRLRELCRQWLRPDMHSKEQILELLVLEQFLTILPGELQAWVREQHPDSGEEVVALLEYLDRQLDDTPPQVPDDDDGQELLCSKAVLLTSAQGSESSQMEPVEPLLKQESLGSLPSEVRVTHVGHCGEDGVTATRLTSELQGLLKMEDVAPVLSPRWTEQDSSQMNLYKDGMQEHSGSLVSLDQDMQTKVRDLPRAEEYRDQKPEQTVCFLGEDTVPIPTGAEASEQEGKLQAAQKSATGTRRFYCRECGKSFAQSSGLSKHKRIHTGLKPYECEECGKAFIGSSALIIHQRVHTGEKPYECEECGKAFSHSSDLIKHQRTHTGEKPYECDDCGKTFTQSCSLLEHHRIHTGEKPYQCNMCPKAFRRSSHLLRHQRTHTGDKDFFVPEPYWESQSRVESHWENIETPVSYQCNDCERSFSRITSLIEHQKVHTGEKPFECQTCGKGFTRPSYLIQHQRRHTGKKTSVTVTPAVHSEVGVQLSLN.

The tract at residues 28 to 49 (EQEESSPLAEETSWLGSPGPDR) is disordered. Phosphoserine occurs at positions 33 and 44. One can recognise an SCAN box domain in the interval 51–133 (RQRFRAFRYP…ALLEYLDRQL (83 aa)). Thr136 bears the Phosphothreonine mark. Lys176 participates in a covalent cross-link: Glycyl lysine isopeptide (Lys-Gly) (interchain with G-Cter in SUMO2). Residue Thr206 is modified to Phosphothreonine. A KRAB domain is found at 213 to 273 (LKMEDVAPVL…RAEEYRDQKP (61 aa)). Ser223 carries the phosphoserine modification. C2H2-type zinc fingers lie at residues 313-335 (FYCR…KRIH), 341-363 (YECE…QRVH), 369-391 (YECE…QRTH), 397-419 (YECD…HRIH), and 425-447 (YQCN…QRTH). Thr448 is modified (phosphothreonine). 2 consecutive C2H2-type zinc fingers follow at residues 479 to 501 (YQCN…QKVH) and 507 to 529 (FECQ…QRRH).

It belongs to the krueppel C2H2-type zinc-finger protein family. As to expression, expressed in heart, brain, spleen, lung, liver, skeletal muscle, kidney and testis.

It localises to the nucleus. The protein resides in the cytoplasm. Its function is as follows. Transcriptional factor that binds to the consensus sequence 5'-[GT][AG][AGT]GGGG-3' and acts as a repressor of autophagy. Specifically represses expression of genes involved in autophagy and lysosome biogenesis/function such as MAP1LC3B, ULK1 or WIPI2. Associates with chromatin at the ITGB4 and VEGF promoters. This Mus musculus (Mouse) protein is Zinc finger protein with KRAB and SCAN domains 3 (Zkscan3).